A 170-amino-acid polypeptide reads, in one-letter code: uncharacterized protein (170 aa).

The next 3 helical transmembrane spans lie at 6 to 26 (PFYF…ILLI), 31 to 51 (LLFI…LIYI), and 91 to 111 (IYFS…IVAF).

It to M.jannaschii MJ1249.1, MJ0210.1 and MJ0785.1.

Its subcellular location is the cell membrane. This is an uncharacterized protein from Methanocaldococcus jannaschii (strain ATCC 43067 / DSM 2661 / JAL-1 / JCM 10045 / NBRC 100440) (Methanococcus jannaschii).